Consider the following 97-residue polypeptide: Large ribosomal subunit protein bL28 (97 aa).

It belongs to the bacterial ribosomal protein bL28 family.

The chain is Large ribosomal subunit protein bL28 from Rhizorhabdus wittichii (strain DSM 6014 / CCUG 31198 / JCM 15750 / NBRC 105917 / EY 4224 / RW1) (Sphingomonas wittichii).